A 192-amino-acid chain; its full sequence is Protein GrpE (192 aa).

Belongs to the GrpE family. As to quaternary structure, homodimer.

Its subcellular location is the cytoplasm. Its function is as follows. Participates actively in the response to hyperosmotic and heat shock by preventing the aggregation of stress-denatured proteins, in association with DnaK and GrpE. It is the nucleotide exchange factor for DnaK and may function as a thermosensor. Unfolded proteins bind initially to DnaJ; upon interaction with the DnaJ-bound protein, DnaK hydrolyzes its bound ATP, resulting in the formation of a stable complex. GrpE releases ADP from DnaK; ATP binding to DnaK triggers the release of the substrate protein, thus completing the reaction cycle. Several rounds of ATP-dependent interactions between DnaJ, DnaK and GrpE are required for fully efficient folding. This is Protein GrpE from Neisseria gonorrhoeae (strain NCCP11945).